The chain runs to 81 residues: Putative chemokine-related protein B42 (81 aa).

3 disulfides stabilise this stretch: Cys7/Cys73, Cys8/Cys29, and Cys11/Cys45.

As to expression, expressed in placenta, heart, lung, liver, pancreas, skeletal muscle and brain.

The protein localises to the cytoplasm. The sequence is that of Putative chemokine-related protein B42 from Homo sapiens (Human).